The chain runs to 244 residues: rRNA adenine N-6-methyltransferase (244 aa).

S-adenosyl-L-methionine contacts are provided by N11, I13, G38, E59, D84, and N101.

The protein belongs to the class I-like SAM-binding methyltransferase superfamily. rRNA adenine N(6)-methyltransferase family.

The catalysed reaction is adenosine(2085) in 23S rRNA + 2 S-adenosyl-L-methionine = N(6)-dimethyladenosine(2085) in 23S rRNA + 2 S-adenosyl-L-homocysteine + 2 H(+). This protein produces a dimethylation of the adenine residue at position 2085 in 23S rRNA, resulting in reduced affinity between ribosomes and macrolide-lincosamide-streptogramin B antibiotics. The sequence is that of rRNA adenine N-6-methyltransferase (ermC) from Staphylococcus aureus.